The chain runs to 282 residues: Uracil-DNA glycosylase (282 aa).

A disordered region spans residues 15 to 40; that stretch reads SAASKRKSASNTENIPEKVPAGNENQ. Asp-123 acts as the Proton acceptor in catalysis.

The protein belongs to the uracil-DNA glycosylase (UDG) superfamily. UNG family.

The protein localises to the mitochondrion. Its subcellular location is the nucleus. The catalysed reaction is Hydrolyzes single-stranded DNA or mismatched double-stranded DNA and polynucleotides, releasing free uracil.. Its activity is regulated as follows. Inhibited by UGI, a B.subtilis bacteriophage PBS2 peptide inhibitor. In terms of biological role, excises uracil residues from the DNA which can arise as a result of misincorporation of dUMP residues by DNA polymerase or due to deamination of cytosine. This chain is Uracil-DNA glycosylase, found in Caenorhabditis elegans.